Consider the following 410-residue polypeptide: Diguanylate cyclase DgcM (410 aa).

PAS domains are found at residues 3–70 (THNF…NQHD) and 129–198 (GFYA…HLPG). One can recognise a PAC domain in the interval 199-251 (GHKPLNFVHKLADGSTRHVQTYAGPIEIYGDKLMLCIVHDITEQKRLEEQLEH). Residues 283–410 (QDYSLLLIDT…NDGRNRVLAA (128 aa)) enclose the GGDEF domain. Residue Asp-291 participates in Mg(2+) binding. Asn-299, His-304, and Asp-308 together coordinate substrate. Glu-334 is a Mg(2+) binding site. The active-site Proton acceptor is the Glu-334.

As to quaternary structure, forms homodimers and homotetramers. Interacts with PdeR and MlrA. It depends on Mg(2+) as a cofactor.

The catalysed reaction is 2 GTP = 3',3'-c-di-GMP + 2 diphosphate. Its pathway is purine metabolism; 3',5'-cyclic di-GMP biosynthesis. Activity is inhibited by the phosphodiesterase PdeR. Inhibition is relieved by high cellular c-di-GMP levels. Its function is as follows. Part of a signaling cascade that regulates curli biosynthesis. The cascade is composed of two cyclic-di-GMP (c-di-GMP) control modules, in which c-di-GMP controlled by the DgcE/PdeH pair (module I) regulates the activity of the DgcM/PdeR pair (module II), which in turn regulates activity of the transcription factor MlrA and expression of the master biofilm regulator csgD. DgcM stimulates activity of MlrA by direct interaction, leading to the transcription of csgD. It also catalyzes the synthesis of c-di-GMP via the condensation of 2 GTP molecules, which contributes to the c-di-GMP pool generated by module I in a positive feedback loop. Production of c-di-GMP contributes to but is not essential for MlrA activation. The protein is Diguanylate cyclase DgcM of Escherichia coli (strain K12).